The sequence spans 243 residues: Small ribosomal subunit protein eS4 (243 aa).

Residues 43 to 105 form the S4 RNA-binding domain; sequence IPLLYIVRDY…TGEHYRVLPN (63 aa).

This sequence belongs to the eukaryotic ribosomal protein eS4 family.

This chain is Small ribosomal subunit protein eS4 (rps4e), found in Pyrococcus horikoshii (strain ATCC 700860 / DSM 12428 / JCM 9974 / NBRC 100139 / OT-3).